Reading from the N-terminus, the 296-residue chain is Bifunctional protein FolD (296 aa).

NADP(+) contacts are provided by residues 166–168 (GRS), Ser195, and Ile236.

The protein belongs to the tetrahydrofolate dehydrogenase/cyclohydrolase family. In terms of assembly, homodimer.

It carries out the reaction (6R)-5,10-methylene-5,6,7,8-tetrahydrofolate + NADP(+) = (6R)-5,10-methenyltetrahydrofolate + NADPH. It catalyses the reaction (6R)-5,10-methenyltetrahydrofolate + H2O = (6R)-10-formyltetrahydrofolate + H(+). Its pathway is one-carbon metabolism; tetrahydrofolate interconversion. Its function is as follows. Catalyzes the oxidation of 5,10-methylenetetrahydrofolate to 5,10-methenyltetrahydrofolate and then the hydrolysis of 5,10-methenyltetrahydrofolate to 10-formyltetrahydrofolate. The sequence is that of Bifunctional protein FolD from Chlorobium limicola (strain DSM 245 / NBRC 103803 / 6330).